The following is a 93-amino-acid chain: Small ribosomal subunit protein uS19 (93 aa).

The protein belongs to the universal ribosomal protein uS19 family.

Its function is as follows. Protein S19 forms a complex with S13 that binds strongly to the 16S ribosomal RNA. This chain is Small ribosomal subunit protein uS19, found in Synechococcus sp. (strain JA-2-3B'a(2-13)) (Cyanobacteria bacterium Yellowstone B-Prime).